We begin with the raw amino-acid sequence, 94 residues long: Large ribosomal subunit protein uL24c (94 aa).

This sequence belongs to the universal ribosomal protein uL24 family. In terms of assembly, part of the 50S ribosomal subunit.

It localises to the plastid. It is found in the chloroplast. In terms of biological role, one of two assembly initiator proteins, it binds directly to the 5'-end of the 23S rRNA, where it nucleates assembly of the 50S subunit. The polypeptide is Large ribosomal subunit protein uL24c (rpl24) (Cyanidium caldarium (Red alga)).